Here is a 347-residue protein sequence, read N- to C-terminus: Major capsid protein (347 aa).

The protein belongs to the T7virus major capsid protein family. As to quaternary structure, homohexamer. Interacts with the connector protein and the minor capsid protein. Interacts with the capsid assembly scaffolding protein; capsid proteins and scaffolding proteins form building blocks that assemble to form the procapsid, each hexamer of the major capsid protein interacting with 2 scaffolding proteins.

It is found in the virion. Functionally, assembles with the minor capsid protein to form an icosahedral capsid with a T=7 symmetry, about 60 nm in diameter, and consisting of 415 capsid proteins. The major and minor capsid proteins are incorporated into the capsid in about a 90/10 ratio respectively. Once the capsid formed, encapsidates one single copy of the viral genome. The protein is Major capsid protein (10) of Escherichia coli (Bacteriophage T3).